The chain runs to 563 residues: Coiled-coil domain-containing protein 38 (563 aa).

Positions 128–211 (TKKKTIKRFE…SIKSDIAKTE (84 aa)) form a coiled coil. Residues 265-310 (DNSIDSDKMSVSEEWSSRRGSQGGRHGKHTLGQDSRKSSGFTRPES) are disordered. The span at 269 to 281 (DSDKMSVSEEWSS) shows a compositional bias: basic and acidic residues. Coiled coils occupy residues 361-415 (QDVD…RSRL) and 454-522 (NAVQ…AVAQ). The interval 543–563 (QELLLVSDTRSKSQDEEYFFS) is disordered.

Interacts with CCDC42, CFAP53, IFT88 and ODF2. Interacts with CCDC146. Interacts with TEKT3. Interacts with ubiquitinated histone H2A. In terms of tissue distribution, expressed exclusively in testis where it is detected mainly in spermatogonia and spermatocytes (at protein level).

It is found in the cytoplasm. The protein resides in the cytoskeleton. The protein localises to the microtubule organizing center. Its subcellular location is the centrosome. It localises to the perinuclear region. It is found in the cell projection. The protein resides in the cilium. The protein localises to the flagellum. Essential for male fertility. Required for sperm flagellum biogenesis. Also required for acrosome biogenesis. Required for the attachment of developing acrosomes to the nucleus during spermiogenesis and may be involved in the transport of fibrous sheath components. The sequence is that of Coiled-coil domain-containing protein 38 (Ccdc38) from Mus musculus (Mouse).